A 157-amino-acid polypeptide reads, in one-letter code: uncharacterized protein (157 aa).

One can recognise an N-acetyltransferase domain in the interval 9–154; that stretch reads LLINYKTLDE…ETNLNAVTNE (146 aa).

This is an uncharacterized protein from Bacillus cereus (strain ATCC 14579 / DSM 31 / CCUG 7414 / JCM 2152 / NBRC 15305 / NCIMB 9373 / NCTC 2599 / NRRL B-3711).